Reading from the N-terminus, the 491-residue chain is UDP-N-acetylmuramoyl-L-alanyl-D-glutamate--2,6-diaminopimelate ligase (491 aa).

Position 30 (serine 30) interacts with UDP-N-acetyl-alpha-D-muramoyl-L-alanyl-D-glutamate. 108 to 114 is an ATP binding site; it reads GTNGKTT. Residues asparagine 149, 150–151, serine 177, glutamine 183, and arginine 185 contribute to the UDP-N-acetyl-alpha-D-muramoyl-L-alanyl-D-glutamate site; that span reads TT. Lysine 217 carries the N6-carboxylysine modification. Meso-2,6-diaminopimelate-binding positions include arginine 383, 407–410, glycine 458, and glutamate 462; that span reads DNPR. A Meso-diaminopimelate recognition motif motif is present at residues 407-410; that stretch reads DNPR.

This sequence belongs to the MurCDEF family. MurE subfamily. The cofactor is Mg(2+). Post-translationally, carboxylation is probably crucial for Mg(2+) binding and, consequently, for the gamma-phosphate positioning of ATP.

It localises to the cytoplasm. It catalyses the reaction UDP-N-acetyl-alpha-D-muramoyl-L-alanyl-D-glutamate + meso-2,6-diaminopimelate + ATP = UDP-N-acetyl-alpha-D-muramoyl-L-alanyl-gamma-D-glutamyl-meso-2,6-diaminopimelate + ADP + phosphate + H(+). The protein operates within cell wall biogenesis; peptidoglycan biosynthesis. In terms of biological role, catalyzes the addition of meso-diaminopimelic acid to the nucleotide precursor UDP-N-acetylmuramoyl-L-alanyl-D-glutamate (UMAG) in the biosynthesis of bacterial cell-wall peptidoglycan. This Listeria monocytogenes serovar 1/2a (strain ATCC BAA-679 / EGD-e) protein is UDP-N-acetylmuramoyl-L-alanyl-D-glutamate--2,6-diaminopimelate ligase.